The following is a 137-amino-acid chain: DNA-binding protein H-NS (137 aa).

The stretch at 13-65 (TLRAQARECTLETLEEMLEKLEVVVNERREEESAAAAEVEERTRKLQQYREML) forms a coiled coil. Residues 112-117 (QGRTPA) mediate DNA binding.

The protein belongs to the histone-like protein H-NS family. In terms of assembly, homodimer that oligomerizes on DNA into higher-order complexes that form bridges between disparate regions of DNA compacting it. Interacts with Hha, YdgT and StpA.

The protein resides in the cytoplasm. Its subcellular location is the nucleoid. A DNA-binding protein implicated in transcriptional repression and chromosome organization and compaction. Binds AT-rich DNA, repressing its transcription; about 754/4438 tested genes (15%) bind to H-NS, 70% of these are AT-rich and correspond to horizontally transferred geness (HTG), thus playing a central role in silencing foreign genes. This offers the selective advantage of silencing foreign DNA. Binds nucleation sites in AT-rich DNA and bridges them, forming higher-order nucleoprotein complexes and condensing the chromosome. A subset of genes are repressed by H-NS in association with Hha and/or YdgT. The protein is DNA-binding protein H-NS (hns) of Salmonella typhimurium (strain 14028s / SGSC 2262).